The following is a 364-amino-acid chain: Mannose-1-phosphate guanylyltransferase catalytic subunit beta (364 aa).

Residues 2–220 are substrate-binding domain; that stretch reads KALILVGGYG…PGFWMDVGQP (219 aa). GDP-alpha-D-mannose is bound at residue Asp-109. Asp-109 contributes to the Mg(2+) binding site. The active site involves Lys-160. Asp-216 serves as a coordination point for GDP-alpha-D-mannose. Residue Asp-216 coordinates Mg(2+). The interval 243–364 is hexapeptide repeat domain; that stretch reads ATGSNIHGTA…VNVPSKDIIM (122 aa).

This sequence belongs to the transferase hexapeptide repeat family. As to quaternary structure, component of the GMPPA-GMPPB mannose-1-phosphate guanylyltransferase complex composed of 4 GMPPA subunits and 8 tag-335/GMPPB subunits; the complex is organized into three layers, a central layer made up of 2 GMPPA dimers sandwiched between two layers each made up of 2 tag-335/GMPPB dimers. Catalytic activity of tag-335/GMPPB is reduced when part of the complex and binding of GDP-alpha-D-Mannose by GMPPA induces allosteric feedback inhibition of tag-335/GMPPB. Mg(2+) is required as a cofactor.

It carries out the reaction alpha-D-mannose 1-phosphate + GTP + H(+) = GDP-alpha-D-mannose + diphosphate. It functions in the pathway nucleotide-sugar biosynthesis; GDP-alpha-D-mannose biosynthesis; GDP-alpha-D-mannose from alpha-D-mannose 1-phosphate (GTP route): step 1/1. Enzyme activity is reduced by incorporation into the GMPPA-GMPPB mannose-1-phosphate guanylyltransferase complex. Allosterically inhibited, when part of the GMPPA-GMPPB complex, by GDP-alpha-D-mannose binding to GMPPA. Its function is as follows. Catalytic subunit of the GMPPA-GMPPB mannose-1-phosphate guanylyltransferase complex. Catalyzes the formation of GDP-mannose, an essential precursor of glycan moieties of glycoproteins and glycolipids. Can catalyze the reverse reaction in vitro. Together with GMPPA regulates GDP-alpha-D-mannose levels. This chain is Mannose-1-phosphate guanylyltransferase catalytic subunit beta, found in Caenorhabditis briggsae.